A 502-amino-acid chain; its full sequence is MVVNYQHPIQCIRYVEKQTAGFRNLFLASAGSKIYTYAAETGRKLAIWPEAPNASHSTVVSVAPSSEGDEPSAKKRKVSPVPEQTAKGGQPEASTAWSTIPILTVSSDGNFLVAVTGEDKCLRVFEIEESGHLKQLSERHMPKRPSAITLVDDDKTILCGDKFGDVYSLPLIDTGKSSIAPKIHAKMKPNQPAATTLTVHSKRNLASLEQQLRHYSQNEKTAEEKPTSAFELHLILGHVSMLTDLVYVSVPVDATSGRQRPYIFTADRDEHIRVSRGPPQAHIIENYCLGHTSFVSSLCVPQWAPEYLVSGGGDNHLIVWRWNESRLVQKVPLLEEGTDSEVVVRRIWALSLTKAANSQENANVILVALDGSSKLLCFTLESDGSLKAQNSIQASGNVLDLTVPSENSSIVVSVDAVREAGSTQEWRTSPSSPSTLVEAFRLKPASEGPLDWERTSEAITAQINSEGTSDISADLDEKQKKELNDSLYSLGNLRKKNMGEDD.

WD repeat units follow at residues 4 to 58 (NYQH…SHST), 95 to 135 (TAWS…HLKQ), and 290 to 330 (GHTS…LVQK). The tract at residues 58-93 (TVVSVAPSSEGDEPSAKKRKVSPVPEQTAKGGQPEA) is disordered.

Belongs to the WD repeat TRM82 family. In terms of assembly, forms a heterodimer with the catalytic subunit trm8.

The protein resides in the nucleus. It functions in the pathway tRNA modification; N(7)-methylguanine-tRNA biosynthesis. Its function is as follows. Required for the formation of N(7)-methylguanine at position 46 (m7G46) in tRNA. In the complex, it is required to stabilize and induce conformational changes of the catalytic subunit. This Aspergillus fumigatus (strain CBS 144.89 / FGSC A1163 / CEA10) (Neosartorya fumigata) protein is tRNA (guanine-N(7)-)-methyltransferase non-catalytic subunit trm82 (trm82).